The chain runs to 41 residues: Large ribosomal subunit protein bL36 (41 aa).

This sequence belongs to the bacterial ribosomal protein bL36 family.

The chain is Large ribosomal subunit protein bL36 from Parvibaculum lavamentivorans (strain DS-1 / DSM 13023 / NCIMB 13966).